A 106-amino-acid polypeptide reads, in one-letter code: Evasin P1168 (106 aa).

An N-terminal signal peptide occupies residues 1–24 (MEVKISTFLQIAVLIVLGIHLIAA). 3 cysteine pairs are disulfide-bonded: Cys45–Cys67, Cys49–Cys69, and Cys60–Cys80. N-linked (GlcNAc...) asparagine glycans are attached at residues Asn48, Asn54, and Asn64.

Its subcellular location is the secreted. In terms of biological role, salivary chemokine-binding protein which binds to host chemokines CXCL1, CXCL2 and CXCL8. The polypeptide is Evasin P1168 (Ixodes ricinus (Common tick)).